A 478-amino-acid polypeptide reads, in one-letter code: MTLSFITRWRDELPETYTALSPTPLNNARLIWHNTELANTLSIPSSLFKNGAGVWGGETLLPGMSPLAQVYSGHQFGVWAGQLGDGRGILLGEQLLADGTTMDWHLKGAGLTPYSRMGDGRAVLRSTIRESLASEAMHYLGIPTTRALSIVTSDSPVYRETVESGAMLMRVAPSHLRFGHFEHFYYRREPEKVRQLADFAIRHYWSHLDDEEDKYRLWFTDVVARTASLIAQWQTVGFAHGVMNTDNMSLLGLTLDYGPFGFLDDYEPGFICNHSDHQGRYSFDNQPAVALWNLQRLAQTLSPFVAVDGLNEALDSYQQVLLTHYGQRMRQKLGFMTEQKEDNALLNELFSLMARERSDYTRTFRMLSLTEQHSAASPLRDEFIDRAAFDDWFARYRVRLQQDEVTDSERQQLMQSVNPALVLRNWLAQRAIEAAEKGDMTELHRLHEALRNPFSDRDDDYVSRPPDWGKRLEVSCSS.

The ATP site is built by Gly84, Gly86, Arg87, Lys107, Asp119, Gly120, Arg170, and Arg177. The active-site Proton acceptor is the Asp246. 2 residues coordinate Mg(2+): Asn247 and Asp256. Asp256 serves as a coordination point for ATP.

Belongs to the SELO family. The cofactor is Mg(2+). Requires Mn(2+) as cofactor.

It catalyses the reaction L-seryl-[protein] + ATP = 3-O-(5'-adenylyl)-L-seryl-[protein] + diphosphate. The catalysed reaction is L-threonyl-[protein] + ATP = 3-O-(5'-adenylyl)-L-threonyl-[protein] + diphosphate. The enzyme catalyses L-tyrosyl-[protein] + ATP = O-(5'-adenylyl)-L-tyrosyl-[protein] + diphosphate. It carries out the reaction L-histidyl-[protein] + UTP = N(tele)-(5'-uridylyl)-L-histidyl-[protein] + diphosphate. It catalyses the reaction L-seryl-[protein] + UTP = O-(5'-uridylyl)-L-seryl-[protein] + diphosphate. The catalysed reaction is L-tyrosyl-[protein] + UTP = O-(5'-uridylyl)-L-tyrosyl-[protein] + diphosphate. In terms of biological role, nucleotidyltransferase involved in the post-translational modification of proteins. It can catalyze the addition of adenosine monophosphate (AMP) or uridine monophosphate (UMP) to a protein, resulting in modifications known as AMPylation and UMPylation. This Escherichia coli O81 (strain ED1a) protein is Protein nucleotidyltransferase YdiU.